The chain runs to 354 residues: Uroporphyrinogen decarboxylase (354 aa).

Residues 27 to 31, D77, Y154, S209, and H327 each bind substrate; that span reads RQAGR.

The protein belongs to the uroporphyrinogen decarboxylase family. In terms of assembly, homodimer.

The protein localises to the cytoplasm. The catalysed reaction is uroporphyrinogen III + 4 H(+) = coproporphyrinogen III + 4 CO2. It functions in the pathway porphyrin-containing compound metabolism; protoporphyrin-IX biosynthesis; coproporphyrinogen-III from 5-aminolevulinate: step 4/4. Functionally, catalyzes the decarboxylation of four acetate groups of uroporphyrinogen-III to yield coproporphyrinogen-III. This is Uroporphyrinogen decarboxylase from Shewanella halifaxensis (strain HAW-EB4).